Here is a 745-residue protein sequence, read N- to C-terminus: Isocitrate dehydrogenase [NADP] 2 (745 aa).

Positions 87 and 89 each coordinate NADP(+). 5 residues coordinate D-threo-isocitrate: S134, N137, R141, R147, and K257. D352 lines the Mg(2+) pocket. D-threo-isocitrate contacts are provided by Y422 and R550. Mg(2+)-binding residues include D551 and D555. The NADP(+) site is built by G587, S588, A589, H592, R603, D605, and R652.

Belongs to the monomeric-type IDH family. As to quaternary structure, may form homotrimers. Also forms homotetramers at low salt concentration, which are dissociated into homodimers, but not into monomers, at high salt concentration (1 M). Mg(2+) is required as a cofactor.

The catalysed reaction is D-threo-isocitrate + NADP(+) = 2-oxoglutarate + CO2 + NADPH. Functionally, catalyzes the oxidative decarboxylation of isocitrate to 2-oxoglutarate and carbon dioxide with the concomitant reduction of NADP(+). Cannot use NAD(+). In Mycobacterium tuberculosis (strain ATCC 25618 / H37Rv), this protein is Isocitrate dehydrogenase [NADP] 2.